The primary structure comprises 368 residues: tRNA-specific 2-thiouridylase MnmA (368 aa).

ATP is bound by residues G11–S18 and M37. An interaction with target base in tRNA region spans residues N97–D99. The active-site Nucleophile is C102. Cysteines 102 and 199 form a disulfide. G127 is an ATP binding site. Positions K149–Q151 are interaction with tRNA. Residue C199 is the Cysteine persulfide intermediate of the active site. Positions R311–Y312 are interaction with tRNA.

This sequence belongs to the MnmA/TRMU family. In terms of assembly, interacts with TusE.

The protein localises to the cytoplasm. The catalysed reaction is S-sulfanyl-L-cysteinyl-[protein] + uridine(34) in tRNA + AH2 + ATP = 2-thiouridine(34) in tRNA + L-cysteinyl-[protein] + A + AMP + diphosphate + H(+). Catalyzes the 2-thiolation of uridine at the wobble position (U34) of tRNA(Lys), tRNA(Glu) and tRNA(Gln), leading to the formation of s(2)U34, the first step of tRNA-mnm(5)s(2)U34 synthesis. Sulfur is provided by IscS, via a sulfur-relay system. Binds ATP and its substrate tRNAs. In Escherichia coli O1:K1 / APEC, this protein is tRNA-specific 2-thiouridylase MnmA.